The primary structure comprises 441 residues: Chromosomal replication initiator protein DnaA (441 aa).

The interval 1 to 80 (MQNDVLARWE…MHQEISLQFI (80 aa)) is domain I, interacts with DnaA modulators. Residues 80-102 (ILAGQEVDQPKPKERSSEETYIN) are domain II. Positions 103–320 (ILNPRYTFDT…GALIRVSAFS (218 aa)) are domain III, AAA+ region. The ATP site is built by Gly-147, Gly-149, Lys-150, and Thr-151. The interval 321 to 441 (SLEQRDATPQ…IKELKKRIGE (121 aa)) is domain IV, binds dsDNA.

It belongs to the DnaA family. In terms of assembly, oligomerizes as a right-handed, spiral filament on DNA at oriC.

Its subcellular location is the cytoplasm. Functionally, plays an essential role in the initiation and regulation of chromosomal replication. ATP-DnaA binds to the origin of replication (oriC) to initiate formation of the DNA replication initiation complex once per cell cycle. Binds the DnaA box (a 9 base pair repeat at the origin) and separates the double-stranded (ds)DNA. Forms a right-handed helical filament on oriC DNA; dsDNA binds to the exterior of the filament while single-stranded (ss)DNA is stabiized in the filament's interior. The ATP-DnaA-oriC complex binds and stabilizes one strand of the AT-rich DNA unwinding element (DUE), permitting loading of DNA polymerase. After initiation quickly degrades to an ADP-DnaA complex that is not apt for DNA replication. Binds acidic phospholipids. The sequence is that of Chromosomal replication initiator protein DnaA from Desulforamulus reducens (strain ATCC BAA-1160 / DSM 100696 / MI-1) (Desulfotomaculum reducens).